Reading from the N-terminus, the 82-residue chain is DNA-directed RNA polymerase subunit Rpo5 (82 aa).

It belongs to the archaeal Rpo5/eukaryotic RPB5 RNA polymerase subunit family. Part of the RNA polymerase complex.

Its subcellular location is the cytoplasm. It catalyses the reaction RNA(n) + a ribonucleoside 5'-triphosphate = RNA(n+1) + diphosphate. Its function is as follows. DNA-dependent RNA polymerase (RNAP) catalyzes the transcription of DNA into RNA using the four ribonucleoside triphosphates as substrates. This Pyrococcus horikoshii (strain ATCC 700860 / DSM 12428 / JCM 9974 / NBRC 100139 / OT-3) protein is DNA-directed RNA polymerase subunit Rpo5.